Here is a 124-residue protein sequence, read N- to C-terminus: Small ribosomal subunit protein bS6 (124 aa).

The segment covering 105–115 has biased composition (basic and acidic residues); sequence EVQHEEARKSA. Residues 105–124 are disordered; sequence EVQHEEARKSAQSDAPVAAA.

The protein belongs to the bacterial ribosomal protein bS6 family.

In terms of biological role, binds together with bS18 to 16S ribosomal RNA. The chain is Small ribosomal subunit protein bS6 from Polynucleobacter necessarius subsp. necessarius (strain STIR1).